Here is a 318-residue protein sequence, read N- to C-terminus: GTP cyclohydrolase MptA (318 aa).

Belongs to the GTP cyclohydrolase IV family. Homodimer. Requires Fe(2+) as cofactor.

The catalysed reaction is GTP + H2O = 7,8-dihydroneopterin 2',3'-cyclic phosphate + formate + diphosphate + H(+). Its pathway is cofactor biosynthesis; 5,6,7,8-tetrahydromethanopterin biosynthesis. Its function is as follows. Converts GTP to 7,8-dihydro-D-neopterin 2',3'-cyclic phosphate, the first intermediate in the biosynthesis of coenzyme methanopterin. The polypeptide is GTP cyclohydrolase MptA (Methanosarcina acetivorans (strain ATCC 35395 / DSM 2834 / JCM 12185 / C2A)).